The primary structure comprises 230 residues: MKNINAIILLSSLTSASVFAGAYVENREAYNLASDQGEVMLRVGYNFDMGAGIMLTNTYTFQREDELKHGYNEIEGWYPLFKPTDKLTIQPGGLINDKSIGSGGAVYLDVNYKFTPWFNLTVRNRFNHNNYSSTDLNGDLDNNDSYEIGNYWNFIITDKFSYTFEPHYFYNINDFNSGNGTKHHWEITNTFRYRINEHWLPYIELRWLDRNVEPYHREQNQIRIGTKYFF.

An N-terminal signal peptide occupies residues 1-20; that stretch reads MKNINAIILLSSLTSASVFA.

This sequence belongs to the oligogalacturonate-specific porin KdgM (TC 1.B.35) family. OmpL subfamily.

It localises to the cell outer membrane. Outer membrane channel protein that allows an efficient diffusion of low-molecular-weight solutes such as small sugars and tetraglycine. However, the specific substrate recognized by the OmpL channel is unknown. This chain is Porin OmpL (ompL), found in Escherichia coli O157:H7.